Here is a 656-residue protein sequence, read N- to C-terminus: Vi polysaccharide export protein VexE (656 aa).

Functionally, may be involved in translocation of the Vi antigen. The polypeptide is Vi polysaccharide export protein VexE (vexE) (Salmonella typhi).